Reading from the N-terminus, the 327-residue chain is Phenylalanine--tRNA ligase alpha subunit (327 aa).

Position 252 (E252) interacts with Mg(2+).

This sequence belongs to the class-II aminoacyl-tRNA synthetase family. Phe-tRNA synthetase alpha subunit type 1 subfamily. Tetramer of two alpha and two beta subunits. Mg(2+) serves as cofactor.

The protein localises to the cytoplasm. The enzyme catalyses tRNA(Phe) + L-phenylalanine + ATP = L-phenylalanyl-tRNA(Phe) + AMP + diphosphate + H(+). In Salmonella choleraesuis (strain SC-B67), this protein is Phenylalanine--tRNA ligase alpha subunit.